We begin with the raw amino-acid sequence, 100 residues long: NAD(P)H-quinone oxidoreductase subunit 4L, chloroplastic (100 aa).

3 helical membrane-spanning segments follow: residues 1 to 21 (MLEH…FGLI), 29 to 49 (ALMC…TFSN), and 60 to 80 (IFAI…LAIV).

This sequence belongs to the complex I subunit 4L family. NDH is composed of at least 16 different subunits, 5 of which are encoded in the nucleus.

It localises to the plastid. It is found in the chloroplast thylakoid membrane. The catalysed reaction is a plastoquinone + NADH + (n+1) H(+)(in) = a plastoquinol + NAD(+) + n H(+)(out). It carries out the reaction a plastoquinone + NADPH + (n+1) H(+)(in) = a plastoquinol + NADP(+) + n H(+)(out). Its function is as follows. NDH shuttles electrons from NAD(P)H:plastoquinone, via FMN and iron-sulfur (Fe-S) centers, to quinones in the photosynthetic chain and possibly in a chloroplast respiratory chain. The immediate electron acceptor for the enzyme in this species is believed to be plastoquinone. Couples the redox reaction to proton translocation, and thus conserves the redox energy in a proton gradient. The polypeptide is NAD(P)H-quinone oxidoreductase subunit 4L, chloroplastic (Physcomitrium patens (Spreading-leaved earth moss)).